A 446-amino-acid polypeptide reads, in one-letter code: Phosphoglucosamine mutase (446 aa).

Catalysis depends on serine 103, which acts as the Phosphoserine intermediate. Positions 103, 242, 244, and 246 each coordinate Mg(2+). Serine 103 bears the Phosphoserine mark.

This sequence belongs to the phosphohexose mutase family. Mg(2+) is required as a cofactor. In terms of processing, activated by phosphorylation.

It catalyses the reaction alpha-D-glucosamine 1-phosphate = D-glucosamine 6-phosphate. Its function is as follows. Catalyzes the conversion of glucosamine-6-phosphate to glucosamine-1-phosphate. This Corynebacterium urealyticum (strain ATCC 43042 / DSM 7109) protein is Phosphoglucosamine mutase.